A 495-amino-acid polypeptide reads, in one-letter code: Putative aldehyde dehydrogenase AldA (495 aa).

G212–G218 lines the NAD(+) pocket. Active-site residues include E256 and C290.

It belongs to the aldehyde dehydrogenase family.

The enzyme catalyses an aldehyde + NAD(+) + H2O = a carboxylate + NADH + 2 H(+). This chain is Putative aldehyde dehydrogenase AldA (aldA), found in Staphylococcus aureus (strain MSSA476).